We begin with the raw amino-acid sequence, 161 residues long: Allophycocyanin beta subunit (161 aa).

The residue at position 71 (N71) is an N4-methylasparagine. C81 contacts (2R,3E)-phycocyanobilin.

It belongs to the phycobiliprotein family. Heterodimer of an alpha and a beta chain. Contains one covalently linked phycocyanobilin chromophore. The chromophore is added by the phycocyanobilin lyase CpcUS.

The protein resides in the cellular thylakoid membrane. Functionally, light-harvesting photosynthetic bile pigment-protein from the phycobiliprotein complex. Allophycocyanin has a maximum absorption at approximately 650 nanometers. In Picosynechococcus sp. (strain ATCC 27264 / PCC 7002 / PR-6) (Agmenellum quadruplicatum), this protein is Allophycocyanin beta subunit (apcB).